Reading from the N-terminus, the 332-residue chain is Adenosine receptor A2b (332 aa).

Residues 1–8 (MQLETQDA) are Extracellular-facing. A helical transmembrane segment spans residues 9–33 (LYVALELVIAALAVAGNVLVCAAVG). The Cytoplasmic portion of the chain corresponds to 34-43 (ASSALQTPTN). The chain crosses the membrane as a helical span at residues 44–67 (YFLVSLATADVAVGLFAIPFAITI). Residues 68–78 (SLGFCTDFHGC) are Extracellular-facing. Cys78 and Cys171 are disulfide-bonded. The chain crosses the membrane as a helical span at residues 79-101 (LFLACFVLVLTQSSIFSLLAVAV). The Cytoplasmic portion of the chain corresponds to 102 to 121 (DRYLAIRVPLRYKGLVTGTR). A helical membrane pass occupies residues 122-144 (ARGIIAVLWVLAFGIGLTPFLGW). Residues 145–178 (NSKDSATSNCTELGDGIANKSCCPVTCLFENVVP) are Extracellular-facing. Asn153 and Asn163 each carry an N-linked (GlcNAc...) asparagine glycan. Adenosine is bound at residue Glu174. Residues 179–203 (MSYMVYFNFFGCVLPPLLIMLVIYI) traverse the membrane as a helical segment. Topologically, residues 204-235 (KIFMVACKQLQRMELMDHSRTTLQREIHAAKS) are cytoplasmic. A helical membrane pass occupies residues 236-259 (LAMIVGIFALCWLPVHAINCITLF). Asn254 serves as a coordination point for adenosine. At 260 to 267 (HPALAKDK) the chain is on the extracellular side. The helical transmembrane segment at 268-291 (PKWVMNVAILLSHANSVVNPIVYA) threads the bilayer. The adenosine site is built by Ser279 and His280. The Cytoplasmic segment spans residues 292–332 (YRNRDFRYSFHKIISRYVLCQAETKGGSGQAGAQSTLSLGL). Cys311 is lipidated: S-palmitoyl cysteine.

Belongs to the G-protein coupled receptor 1 family.

It is found in the cell membrane. Receptor for adenosine. The activity of this receptor is mediated by G proteins which activate adenylyl cyclase. The protein is Adenosine receptor A2b (Adora2b) of Mus musculus (Mouse).